The sequence spans 131 residues: Translation initiation factor 5A (131 aa).

K37 carries the post-translational modification Hypusine.

It belongs to the eIF-5A family.

It localises to the cytoplasm. In terms of biological role, functions by promoting the formation of the first peptide bond. This chain is Translation initiation factor 5A (eIF5A), found in Methanococcus aeolicus (strain ATCC BAA-1280 / DSM 17508 / OCM 812 / Nankai-3).